The chain runs to 294 residues: Homoserine kinase (294 aa).

An ATP-binding site is contributed by 83–93 (RPKSGLGSSGA).

It belongs to the GHMP kinase family. Homoserine kinase subfamily.

The protein resides in the cytoplasm. It carries out the reaction L-homoserine + ATP = O-phospho-L-homoserine + ADP + H(+). It functions in the pathway amino-acid biosynthesis; L-threonine biosynthesis; L-threonine from L-aspartate: step 4/5. Its function is as follows. Catalyzes the ATP-dependent phosphorylation of L-homoserine to L-homoserine phosphate. This is Homoserine kinase from Pyrococcus abyssi (strain GE5 / Orsay).